Here is a 188-residue protein sequence, read N- to C-terminus: GTP cyclohydrolase 1 (188 aa).

Zn(2+) is bound by residues Cys76, His79, and Cys148.

It belongs to the GTP cyclohydrolase I family. As to quaternary structure, homomer.

The enzyme catalyses GTP + H2O = 7,8-dihydroneopterin 3'-triphosphate + formate + H(+). It functions in the pathway cofactor biosynthesis; 7,8-dihydroneopterin triphosphate biosynthesis; 7,8-dihydroneopterin triphosphate from GTP: step 1/1. The sequence is that of GTP cyclohydrolase 1 from Thermoanaerobacter pseudethanolicus (strain ATCC 33223 / 39E) (Clostridium thermohydrosulfuricum).